We begin with the raw amino-acid sequence, 474 residues long: Ribosomal RNA small subunit methyltransferase F (474 aa).

Residues 119-125 (AAAPGSK), Glu143, Asp170, and Asp188 contribute to the S-adenosyl-L-methionine site. Cys241 (nucleophile) is an active-site residue.

It belongs to the class I-like SAM-binding methyltransferase superfamily. RsmB/NOP family.

It is found in the cytoplasm. It catalyses the reaction cytidine(1407) in 16S rRNA + S-adenosyl-L-methionine = 5-methylcytidine(1407) in 16S rRNA + S-adenosyl-L-homocysteine + H(+). In terms of biological role, specifically methylates the cytosine at position 1407 (m5C1407) of 16S rRNA. This chain is Ribosomal RNA small subunit methyltransferase F, found in Shewanella oneidensis (strain ATCC 700550 / JCM 31522 / CIP 106686 / LMG 19005 / NCIMB 14063 / MR-1).